The following is a 127-amino-acid chain: NHP2-like protein 1 homolog (127 aa).

It belongs to the eukaryotic ribosomal protein eL8 family.

It is found in the nucleus. The protein resides in the nucleolus. In terms of biological role, binds to the 5'-stem-loop of U4 snRNA and may play a role in the late stage of spliceosome assembly. The protein undergoes a conformational change upon RNA-binding. The polypeptide is NHP2-like protein 1 homolog (hoip) (Drosophila melanogaster (Fruit fly)).